Here is a 92-residue protein sequence, read N- to C-terminus: MQITSIAIVFFAAMGAVANPIARESDDLDARDVQLSKFGGECSLKHNTCTYLKGGKNHVVNCGSAANKKCKSDRHHCEYDEHHKRVDCQTPV.

Positions 1–18 are cleaved as a signal peptide; it reads MQITSIAIVFFAAMGAVA. The propeptide occupies 19 to 34; sequence NPIARESDDLDARDVQ. Cystine bridges form between Cys42/Cys70, Cys49/Cys77, and Cys62/Cys88.

The protein localises to the secreted. It localises to the host cytoplasm. In terms of biological role, antifungal protein that acts as an inhibitor of growth of human pathogenic molds and yeasts. Is active against the model organism Neurospora crassa, the opportunistic human pathogens Aspergillus fumigatus, Trichophyton rubrum, and Aspergillus terreus. Provokes a reduction of the incidence of infections caused by Penicillium digitatum and Penicillium italicum in oranges and by Penicillium expansum in apples. Low doses of pafB have self-inhibition activity. Also shows activity against the model yeast Saccaromyces cerevisiae and the opportunistic human pathogen Candida albicans. No antibacterial activity is observed on the Gram-negative Escherichia coli and the Gram-positive Bacillus subtilis. Finally, also shows anti-viral activity in a model of HCoV 229E infected L132 cells. The chain is Antifungal protein B from Penicillium chrysogenum (Penicillium notatum).